A 304-amino-acid polypeptide reads, in one-letter code: UDP-3-O-acyl-N-acetylglucosamine deacetylase (304 aa).

Residues His78, His237, and Asp241 each coordinate Zn(2+). The active-site Proton donor is the His264.

It belongs to the LpxC family. Zn(2+) is required as a cofactor.

It catalyses the reaction a UDP-3-O-[(3R)-3-hydroxyacyl]-N-acetyl-alpha-D-glucosamine + H2O = a UDP-3-O-[(3R)-3-hydroxyacyl]-alpha-D-glucosamine + acetate. It participates in glycolipid biosynthesis; lipid IV(A) biosynthesis; lipid IV(A) from (3R)-3-hydroxytetradecanoyl-[acyl-carrier-protein] and UDP-N-acetyl-alpha-D-glucosamine: step 2/6. In terms of biological role, catalyzes the hydrolysis of UDP-3-O-myristoyl-N-acetylglucosamine to form UDP-3-O-myristoylglucosamine and acetate, the committed step in lipid A biosynthesis. This chain is UDP-3-O-acyl-N-acetylglucosamine deacetylase, found in Thioalkalivibrio sulfidiphilus (strain HL-EbGR7).